The following is a 146-amino-acid chain: Large ribosomal subunit protein eL32 (146 aa).

The protein belongs to the eukaryotic ribosomal protein eL32 family.

This is Large ribosomal subunit protein eL32 (rpl32e) from Methanocaldococcus jannaschii (strain ATCC 43067 / DSM 2661 / JAL-1 / JCM 10045 / NBRC 100440) (Methanococcus jannaschii).